The sequence spans 460 residues: MALQDILSVSDLNRYIKLVLEKEPHLQDIWVRGEISNFTHHSSGHMYFTLKDKQSRIKVVMFASYNRFLRFLPKDGAKAIVRGSISAYERDGAYQFYAKEMQPDGLGSLYLAFEQLKEKLAQEGLFAAERKRMLPRFPKRVGVVTSPTGAAIRDICTTIRRRYPQAEIVLSPAVVQGADAPASIVSAIRIMNDQPDIDVLIVGRGGGSIEELWAFNDENVARAIATSLIPVISAVGHETDVTIADFVADVRAATPTAAAELAVPHYLEWVERVRQLEIRMHRAVRGTMTEQRNRLTRLGNSYAMRQPERRLEEAAERLDRAHLRMRQSMKHLLDRRRERYTRLDEQIKRYRLADQIGEKRKNLSKLRATLDERMLGRLNQKRMAFAARIATLEALSPLKVMQRGFSLVYTNDRLVKSVEQFAPGDEIMVRLSDGSATARVEKVNREEEKQSGSQKNGTRD.

Residues 438 to 460 are disordered; it reads ARVEKVNREEEKQSGSQKNGTRD. Residues 439–450 show a composition bias toward basic and acidic residues; the sequence is RVEKVNREEEKQ. Residues 451 to 460 are compositionally biased toward polar residues; the sequence is SGSQKNGTRD.

The protein belongs to the XseA family. Heterooligomer composed of large and small subunits.

It is found in the cytoplasm. It carries out the reaction Exonucleolytic cleavage in either 5'- to 3'- or 3'- to 5'-direction to yield nucleoside 5'-phosphates.. Functionally, bidirectionally degrades single-stranded DNA into large acid-insoluble oligonucleotides, which are then degraded further into small acid-soluble oligonucleotides. The sequence is that of Exodeoxyribonuclease 7 large subunit from Brevibacillus brevis (strain 47 / JCM 6285 / NBRC 100599).